The sequence spans 123 residues: Small ribosomal subunit protein uS12 (123 aa).

The interval 1–32 (MPTINQLVRHGRKRSVKKTNTPALKASPQKRG) is disordered. Aspartate 89 is subject to 3-methylthioaspartic acid.

This sequence belongs to the universal ribosomal protein uS12 family. As to quaternary structure, part of the 30S ribosomal subunit. Contacts proteins S8 and S17. May interact with IF1 in the 30S initiation complex.

Its function is as follows. With S4 and S5 plays an important role in translational accuracy. Interacts with and stabilizes bases of the 16S rRNA that are involved in tRNA selection in the A site and with the mRNA backbone. Located at the interface of the 30S and 50S subunits, it traverses the body of the 30S subunit contacting proteins on the other side and probably holding the rRNA structure together. The combined cluster of proteins S8, S12 and S17 appears to hold together the shoulder and platform of the 30S subunit. The chain is Small ribosomal subunit protein uS12 from Desulfatibacillum aliphaticivorans.